A 370-amino-acid chain; its full sequence is 3-isopropylmalate dehydrogenase 2 (370 aa).

77 to 90 provides a ligand contact to NAD(+); sequence GPKWDAVPYEVRPE. Substrate-binding residues include R97, R107, R135, and D226. Mg(2+)-binding residues include D226, D250, and D254. 290–302 provides a ligand contact to NAD(+); the sequence is GSAPDIAGKGLAN.

The protein belongs to the isocitrate and isopropylmalate dehydrogenases family. LeuB type 1 subfamily. In terms of assembly, homodimer. Requires Mg(2+) as cofactor. The cofactor is Mn(2+).

The protein resides in the cytoplasm. It carries out the reaction (2R,3S)-3-isopropylmalate + NAD(+) = 4-methyl-2-oxopentanoate + CO2 + NADH. It participates in amino-acid biosynthesis; L-leucine biosynthesis; L-leucine from 3-methyl-2-oxobutanoate: step 3/4. Functionally, catalyzes the oxidation of 3-carboxy-2-hydroxy-4-methylpentanoate (3-isopropylmalate) to 3-carboxy-4-methyl-2-oxopentanoate. The product decarboxylates to 4-methyl-2 oxopentanoate. This Bradyrhizobium diazoefficiens (strain JCM 10833 / BCRC 13528 / IAM 13628 / NBRC 14792 / USDA 110) protein is 3-isopropylmalate dehydrogenase 2.